We begin with the raw amino-acid sequence, 193 residues long: Large ribosomal subunit protein uL5 (193 aa).

It belongs to the universal ribosomal protein uL5 family. As to quaternary structure, part of the 50S ribosomal subunit; part of the 5S rRNA/L5/L18/L25 subcomplex. Contacts the 5S rRNA and the P site tRNA. Forms a bridge to the 30S subunit in the 70S ribosome.

Functionally, this is one of the proteins that bind and probably mediate the attachment of the 5S RNA into the large ribosomal subunit, where it forms part of the central protuberance. In the 70S ribosome it contacts protein S13 of the 30S subunit (bridge B1b), connecting the 2 subunits; this bridge is implicated in subunit movement. Contacts the P site tRNA; the 5S rRNA and some of its associated proteins might help stabilize positioning of ribosome-bound tRNAs. This is Large ribosomal subunit protein uL5 from Renibacterium salmoninarum (strain ATCC 33209 / DSM 20767 / JCM 11484 / NBRC 15589 / NCIMB 2235).